A 497-amino-acid polypeptide reads, in one-letter code: Aldehyde dehydrogenase (497 aa).

NAD(+) is bound at residue 242 to 247 (GSTLVG). The active-site Proton acceptor is E265. Catalysis depends on C299, which acts as the Nucleophile.

This sequence belongs to the aldehyde dehydrogenase family.

It carries out the reaction an aldehyde + NAD(+) + H2O = a carboxylate + NADH + 2 H(+). Its pathway is alcohol metabolism; ethanol degradation; acetate from ethanol: step 2/2. This is Aldehyde dehydrogenase (aldA) from Aspergillus niger.